A 325-amino-acid chain; its full sequence is Elongation factor P--(R)-beta-lysine ligase (325 aa).

76–78 is a substrate binding site; it reads SPE. ATP contacts are provided by residues 100–102 and N109; that span reads RNE. Y118 contributes to the substrate binding site. 244–245 is a binding site for ATP; sequence EL. E251 provides a ligand contact to substrate. An ATP-binding site is contributed by G300.

Belongs to the class-II aminoacyl-tRNA synthetase family. EpmA subfamily. Homodimer.

It carries out the reaction D-beta-lysine + L-lysyl-[protein] + ATP = N(6)-((3R)-3,6-diaminohexanoyl)-L-lysyl-[protein] + AMP + diphosphate + H(+). Functionally, with EpmB is involved in the beta-lysylation step of the post-translational modification of translation elongation factor P (EF-P) on 'Lys-34'. Catalyzes the ATP-dependent activation of (R)-beta-lysine produced by EpmB, forming a lysyl-adenylate, from which the beta-lysyl moiety is then transferred to the epsilon-amino group of EF-P 'Lys-34'. In Escherichia coli O139:H28 (strain E24377A / ETEC), this protein is Elongation factor P--(R)-beta-lysine ligase.